The sequence spans 295 residues: UDP-N-acetylenolpyruvoylglucosamine reductase (295 aa).

One can recognise an FAD-binding PCMH-type domain in the interval 24-188 (KVGGNAEIFF…LKAIFKANKG (165 aa)). The active site involves R168. Catalysis depends on S217, which acts as the Proton donor. Residue E287 is part of the active site.

This sequence belongs to the MurB family. FAD serves as cofactor.

Its subcellular location is the cytoplasm. It catalyses the reaction UDP-N-acetyl-alpha-D-muramate + NADP(+) = UDP-N-acetyl-3-O-(1-carboxyvinyl)-alpha-D-glucosamine + NADPH + H(+). The protein operates within cell wall biogenesis; peptidoglycan biosynthesis. Functionally, cell wall formation. This Rickettsia typhi (strain ATCC VR-144 / Wilmington) protein is UDP-N-acetylenolpyruvoylglucosamine reductase.